Reading from the N-terminus, the 332-residue chain is Tetraacyldisaccharide 4'-kinase (332 aa).

Position 53 to 60 (53 to 60 (SVGGNGKT)) interacts with ATP.

Belongs to the LpxK family.

The catalysed reaction is a lipid A disaccharide + ATP = a lipid IVA + ADP + H(+). It participates in glycolipid biosynthesis; lipid IV(A) biosynthesis; lipid IV(A) from (3R)-3-hydroxytetradecanoyl-[acyl-carrier-protein] and UDP-N-acetyl-alpha-D-glucosamine: step 6/6. In terms of biological role, transfers the gamma-phosphate of ATP to the 4'-position of a tetraacyldisaccharide 1-phosphate intermediate (termed DS-1-P) to form tetraacyldisaccharide 1,4'-bis-phosphate (lipid IVA). The protein is Tetraacyldisaccharide 4'-kinase of Haemophilus influenzae (strain 86-028NP).